A 360-amino-acid polypeptide reads, in one-letter code: uncharacterized protein (360 aa).

A disordered region spans residues 193 to 245; sequence SRHTRPKGQPLSSPKKNSGSAARPSTAIGLCRRSQTPGALQSTGPSNTELEPE. 2 stretches are compositionally biased toward polar residues: residues 202-212 and 225-241; these read PLSSPKKNSGS and RSQT…SNTE.

This is an uncharacterized protein from Homo sapiens (Human).